Consider the following 436-residue polypeptide: Histidinol dehydrogenase (436 aa).

NAD(+)-binding residues include Tyr-135, Gln-197, and Asn-220. Substrate contacts are provided by Thr-243, Gln-265, and His-268. 2 residues coordinate Zn(2+): Gln-265 and His-268. Catalysis depends on proton acceptor residues Glu-334 and His-335. Positions 335, 368, 422, and 427 each coordinate substrate. A Zn(2+)-binding site is contributed by Asp-368. His-427 is a binding site for Zn(2+).

The protein belongs to the histidinol dehydrogenase family. Zn(2+) serves as cofactor.

The catalysed reaction is L-histidinol + 2 NAD(+) + H2O = L-histidine + 2 NADH + 3 H(+). It functions in the pathway amino-acid biosynthesis; L-histidine biosynthesis; L-histidine from 5-phospho-alpha-D-ribose 1-diphosphate: step 9/9. Its function is as follows. Catalyzes the sequential NAD-dependent oxidations of L-histidinol to L-histidinaldehyde and then to L-histidine. The sequence is that of Histidinol dehydrogenase from Deinococcus radiodurans (strain ATCC 13939 / DSM 20539 / JCM 16871 / CCUG 27074 / LMG 4051 / NBRC 15346 / NCIMB 9279 / VKM B-1422 / R1).